The primary structure comprises 104 residues: Putative arsenate reductase (104 aa).

Cysteine 12 is a catalytic residue.

The protein belongs to the ArsC family.

It carries out the reaction [glutaredoxin]-dithiol + arsenate + glutathione + H(+) = glutathionyl-S-S-[glutaredoxin] + arsenite + H2O. Functionally, reduction of arsenate [As(V)] to arsenite [As(III)]. This protein expands the substrate specificity of ArsAB pump which can extrude arsenite and antimonite to allow for arsenate pumping and resistance. The protein is Putative arsenate reductase (yfjU) of Escherichia coli (strain K12).